A 360-amino-acid polypeptide reads, in one-letter code: Peptide chain release factor 1 (360 aa).

Gln-234 carries the post-translational modification N5-methylglutamine.

The protein belongs to the prokaryotic/mitochondrial release factor family. In terms of processing, methylated by PrmC. Methylation increases the termination efficiency of RF1.

It is found in the cytoplasm. Peptide chain release factor 1 directs the termination of translation in response to the peptide chain termination codons UAG and UAA. The protein is Peptide chain release factor 1 of Renibacterium salmoninarum (strain ATCC 33209 / DSM 20767 / JCM 11484 / NBRC 15589 / NCIMB 2235).